A 213-amino-acid chain; its full sequence is MGLISYENEAINEVKKADNHHVSKFVTSYYGPSSSSWQSGIWILFVLFVAAVILIILFTFVANRRRRRMGRAPIRGTAWLTPPSYRQSQQQYTGTVQQRTDDYVPEYTETANEHDLGYYDQRGEFHPNDKAAYVAPPPLVQECSSESVNSLERPPAAVVHQANSLDTDYGLTRPSNGRVPAVSDTVEQLERLPGGTTTQEINPPERAKVNARS.

The Lumenal segment spans residues 1–39 (MGLISYENEAINEVKKADNHHVSKFVTSYYGPSSSSWQS). A helical membrane pass occupies residues 40–62 (GIWILFVLFVAAVILIILFTFVA). Residues 63-213 (NRRRRRMGRA…PERAKVNARS (151 aa)) lie on the Cytoplasmic side of the membrane. The PY motif signature appears at 104 to 107 (VPEY). The tract at residues 190–213 (ERLPGGTTTQEINPPERAKVNARS) is disordered. Residues 203–213 (PPERAKVNARS) show a composition bias toward basic and acidic residues.

Interacts with PMT4 and WW domain of RSP5.

It is found in the endoplasmic reticulum membrane. Functionally, regulates chitin deposition in the cell wall. The sequence is that of Protein RCR1 (RCR1) from Saccharomyces cerevisiae (strain ATCC 204508 / S288c) (Baker's yeast).